The primary structure comprises 479 residues: Glycogen synthase (479 aa).

K15 is a binding site for ADP-alpha-D-glucose.

The protein belongs to the glycosyltransferase 1 family. Bacterial/plant glycogen synthase subfamily.

The catalysed reaction is [(1-&gt;4)-alpha-D-glucosyl](n) + ADP-alpha-D-glucose = [(1-&gt;4)-alpha-D-glucosyl](n+1) + ADP + H(+). The protein operates within glycan biosynthesis; glycogen biosynthesis. Functionally, synthesizes alpha-1,4-glucan chains using ADP-glucose. This is Glycogen synthase from Roseobacter denitrificans (strain ATCC 33942 / OCh 114) (Erythrobacter sp. (strain OCh 114)).